A 237-amino-acid chain; its full sequence is Small ribosomal subunit protein eS4 (237 aa).

The S4 RNA-binding domain maps to 37–99 (VPLLIVLRDV…REEYYRIFPD (63 aa)).

The protein belongs to the eukaryotic ribosomal protein eS4 family.

The chain is Small ribosomal subunit protein eS4 from Natronomonas pharaonis (strain ATCC 35678 / DSM 2160 / CIP 103997 / JCM 8858 / NBRC 14720 / NCIMB 2260 / Gabara) (Halobacterium pharaonis).